The sequence spans 230 residues: Response regulator MprA (230 aa).

Residues 4 to 118 form the Response regulatory domain; sequence RILVVDDDRA…ELLARMRALL (115 aa). Aspartate 48 bears the 4-aspartylphosphate mark. The segment at residues 129–227 is a DNA-binding region (ompR/PhoB-type); sequence SPALTFLDLT…VRGVGYVLRE (99 aa).

In terms of processing, phosphorylated and dephosphorylated by MprB.

It is found in the cytoplasm. Its function is as follows. Member of the two-component regulatory system MprB/MprA which contributes to maintaining a balance among several systems involved in stress resistance and is required for establishment and maintenance of persistent infection in the host. Functions as a transcriptional regulator that recognizes a 19-bp nucleotide motif comprizing two loosely conserved 8-bp direct DNA-binding motif repeats separated by a 3-bp spacer region. The chain is Response regulator MprA (mprA) from Mycobacterium sp. (strain JLS).